We begin with the raw amino-acid sequence, 1073 residues long: MMRDRLASLIVVKQEGGSNTSISHHQATAIKCEASLYTESSLFQEINNNSCYRQNLNAPTHQQSHTSHLQHAQQHQTHQQHPLLPPPLPTLPLIYPCRNLFPDGCDINHLACCSSSNSNSNCNSDSNSTSSSPGNSHFFANGNTCAAALTPAPPATEPRKIKPLGAGKLKVGKTDSNSDSNSNCDSRAAAAASTSATSATSATTLAATAAATAAAAEAGGAASAAAAAKISQVRLTNQATTSMLLLQPNSSFSSLSPFDNFSTQTASTTTTTSASAAGHHQHHNHLLHQQHHNQQQQQQQQQQQQQQQQQQQEHLQQQHQQQLVSPQQHLLKSETLLSHEEDQLISNLTDSSVVSHSELFSDLFFPSDSNNSLLSPTTSGYPDNPAEDLTSSIENLTKLTCLRDKRLSSIPEQQLSSEQEQQLCLLSLRSSSDPAIALHAQQQQQQQQQQQQQQQQHQQQQQHLQLQLISPIGGPLSCGSSLPSFQETYSLKYNSSSGSSPQQASSSSTAAPTPTDQVLTLKMDEDCFPPLSGGWSASPPAPSQLQQLHTLQSQAQMSHPNSSNNSSNNAGNSHNNSGGYNYHGHFNAINASANLSPSSSASSLYEYNGVSAADNFYGQQQQQQQQSYQQHNYNSHNGERYSLPTFPTISELAAATAAVEAAAAATVGGPPPVRRASLPVQRTVSPAGSTAQSPKLAKITLNQRHSHAHAHALQLNSAPNSAASSPASADLQAGRLLQAPSQLCAVCGDTAACQHYGVRTCEGCKGFFKRTVQKGSKYVCLADKNCPVDKRRRNRCQFCRFQKCLVVGMVKEVVRTDSLKGRRGRLPSKPKSPQESPPSPPISLITALVRSHVDTTPDPSCLDYSHYEEQSMSEADKVQQFYQLLTSSVDVIKQFAEKIPGYFDLLPEDQELLFQSASLELFVLRLAYRARIDDTKLIFCNGTVLHRTQCLRSFGEWLNDIMEFSRSLHNLEIDISAFACLCALTLITERHGLREPKKVEQLQMKIIGSLRDHVTYNAEAQKKQHYFSRLLGKLPELRSLSVQGLQRIFYLKLEDLVPAPALIENMFVTTLPF.

Disordered stretches follow at residues 55–87 (NLNAPTHQQSHTSHLQHAQQHQTHQQHPLLPPP), 150–185 (TPAPPATEPRKIKPLGAGKLKVGKTDSNSDSNSNCD), 263–326 (TQTA…LVSP), 437–458 (ALHAQQQQQQQQQQQQQQQQHQ), 492–514 (KYNSSSGSSPQQASSSSTAAPTP), 529–579 (PPLS…NSGG), and 618–640 (GQQQQQQQQSYQQHNYNSHNGER). Composition is skewed to low complexity over residues 59–82 (PTHQQSHTSHLQHAQQHQTHQQHP), 175–185 (DSNSDSNSNCD), and 263–277 (TQTASTTTTTSASAA). A compositionally biased stretch (basic residues) spans 279-291 (HHQHHNHLLHQQH). Low complexity-rich tracts occupy residues 292–326 (HNQQQQQQQQQQQQQQQQQQQEHLQQQHQQQLVSP), 441–458 (QQQQQQQQQQQQQQQQHQ), and 495–514 (SSSGSSPQQASSSSTAAPTP). The segment covering 619–636 (QQQQQQQQSYQQHNYNSH) has biased composition (low complexity). The segment at residues 741-816 (SQLCAVCGDT…VGMVKEVVRT (76 aa)) is a DNA-binding region (nuclear receptor). 2 NR C4-type zinc fingers span residues 744 to 764 (CAVCGDTAACQHYGVRTCEGC) and 780 to 804 (CLADKNCPVDKRRRNRCQFCRFQKC). A disordered region spans residues 819–841 (LKGRRGRLPSKPKSPQESPPSPP). In terms of domain architecture, NR LBD spans 840 to 1070 (PPISLITALV…ALIENMFVTT (231 aa)).

The protein belongs to the nuclear hormone receptor family. NR4 subfamily. Forms a heterodimer with USP. As to expression, ubiquitously expressed in preblastoderm embryos, specifically in central nervous system and intestinal tract. Highly expressed in third instar larval imaginal disks and brain complexes, but not in ovaries.

Its subcellular location is the nucleus. Its function is as follows. Binds to NGFI-B response elements. Plays an important role in late stages of epidermal metamorphosis. This chain is Probable nuclear hormone receptor HR38 (Hr38), found in Drosophila melanogaster (Fruit fly).